The sequence spans 319 residues: Cell surface A33 antigen (319 aa).

The first 21 residues, 1-21 (MLGKAGSVVWMLCAIWVAADA), serve as a signal peptide directing secretion. The region spanning 22 to 134 (LTVETTQDIL…QDVNAKSRVR (113 aa)) is the Ig-like V-type domain. The Extracellular segment spans residues 22–235 (LTVETTQDIL…VAPRPPSMNI (214 aa)). Cystine bridges form between Cys43/Cys117, Cys146/Cys222, and Cys162/Cys211. N-linked (GlcNAc...) asparagine glycans are attached at residues Asn99, Asn112, Asn200, and Asn223. Positions 140-227 (PPSKPDCSIQ…GIESCNITVA (88 aa)) constitute an Ig-like C2-type domain. Residues 236–256 (ALYAGIAGGVFVALIIIGVIV) traverse the membrane as a helical segment. Topologically, residues 257 to 319 (YCCCCREKDD…GRSTPDQPFQ (63 aa)) are cytoplasmic. 2 stretches are compositionally biased toward basic and acidic residues: residues 267-276 (KDQDREDARP) and 284-308 (PKKE…DRWS). The interval 267 to 319 (KDQDREDARPNRAAYQVPKKEQKEISRGREDEDDHRHEDRWSSGRSTPDQPFQ) is disordered. The segment covering 309 to 319 (SGRSTPDQPFQ) has biased composition (polar residues).

In terms of processing, palmitoylated.

Its subcellular location is the membrane. In terms of biological role, may play a role in cell-cell recognition and signaling. The sequence is that of Cell surface A33 antigen (Gpa33) from Mus musculus (Mouse).